A 139-amino-acid chain; its full sequence is Large ribosomal subunit protein uL16 (139 aa).

Over residues 1-19 (MLIPRRVKHRKQHHPKRSG) the composition is skewed to basic residues. The interval 1-25 (MLIPRRVKHRKQHHPKRSGMSKGGT) is disordered.

It belongs to the universal ribosomal protein uL16 family. As to quaternary structure, part of the 50S ribosomal subunit.

In terms of biological role, binds 23S rRNA and is also seen to make contacts with the A and possibly P site tRNAs. The polypeptide is Large ribosomal subunit protein uL16 (Streptomyces griseus subsp. griseus (strain JCM 4626 / CBS 651.72 / NBRC 13350 / KCC S-0626 / ISP 5235)).